Consider the following 160-residue polypeptide: Putative 4-hydroxy-4-methyl-2-oxoglutarate aldolase (160 aa).

Substrate contacts are provided by residues 75–78 (GDQL) and arginine 97. Aspartate 98 serves as a coordination point for a divalent metal cation.

This sequence belongs to the class II aldolase/RraA-like family. In terms of assembly, homotrimer. Requires a divalent metal cation as cofactor.

The enzyme catalyses 4-hydroxy-4-methyl-2-oxoglutarate = 2 pyruvate. It carries out the reaction oxaloacetate + H(+) = pyruvate + CO2. In terms of biological role, catalyzes the aldol cleavage of 4-hydroxy-4-methyl-2-oxoglutarate (HMG) into 2 molecules of pyruvate. Also contains a secondary oxaloacetate (OAA) decarboxylase activity due to the common pyruvate enolate transition state formed following C-C bond cleavage in the retro-aldol and decarboxylation reactions. The protein is Putative 4-hydroxy-4-methyl-2-oxoglutarate aldolase of Vibrio parahaemolyticus serotype O3:K6 (strain RIMD 2210633).